Here is a 271-residue protein sequence, read N- to C-terminus: Formamidopyrimidine-DNA glycosylase (271 aa).

The active-site Schiff-base intermediate with DNA is proline 2. The Proton donor role is filled by glutamate 3. Lysine 57 acts as the Proton donor; for beta-elimination activity in catalysis. Residues histidine 90, arginine 109, and lysine 151 each coordinate DNA. The FPG-type zinc finger occupies 236–270 (HVYGRGGETCTQCGNLLSEIKLGQRATVFCGLCQP). The active-site Proton donor; for delta-elimination activity is arginine 260.

It belongs to the FPG family. Monomer. Zn(2+) serves as cofactor.

The catalysed reaction is Hydrolysis of DNA containing ring-opened 7-methylguanine residues, releasing 2,6-diamino-4-hydroxy-5-(N-methyl)formamidopyrimidine.. The enzyme catalyses 2'-deoxyribonucleotide-(2'-deoxyribose 5'-phosphate)-2'-deoxyribonucleotide-DNA = a 3'-end 2'-deoxyribonucleotide-(2,3-dehydro-2,3-deoxyribose 5'-phosphate)-DNA + a 5'-end 5'-phospho-2'-deoxyribonucleoside-DNA + H(+). Its function is as follows. Involved in base excision repair of DNA damaged by oxidation or by mutagenic agents. Acts as a DNA glycosylase that recognizes and removes damaged bases. Has a preference for oxidized purines, such as 7,8-dihydro-8-oxoguanine (8-oxoG). Has AP (apurinic/apyrimidinic) lyase activity and introduces nicks in the DNA strand. Cleaves the DNA backbone by beta-delta elimination to generate a single-strand break at the site of the removed base with both 3'- and 5'-phosphates. This chain is Formamidopyrimidine-DNA glycosylase, found in Shewanella loihica (strain ATCC BAA-1088 / PV-4).